A 523-amino-acid polypeptide reads, in one-letter code: Glycerate kinase (523 aa).

The residue at position 60 (Ser60) is a Phosphoserine. At Lys200 the chain carries N6-acetyllysine.

This sequence belongs to the glycerate kinase type-2 family.

The protein localises to the cytoplasm. The catalysed reaction is (R)-glycerate + ATP = (2R)-3-phosphoglycerate + ADP + H(+). The sequence is that of Glycerate kinase (GLYCTK) from Bos taurus (Bovine).